A 515-amino-acid polypeptide reads, in one-letter code: Maturase K (515 aa).

It belongs to the intron maturase 2 family. MatK subfamily.

It is found in the plastid. The protein resides in the chloroplast. Usually encoded in the trnK tRNA gene intron. Probably assists in splicing its own and other chloroplast group II introns. In Zingiber mioga (Myoga ginger), this protein is Maturase K.